Consider the following 402-residue polypeptide: Deoxyguanosinetriphosphate triphosphohydrolase-like protein (402 aa).

Residues 73-217 (RLTHTIEVAQ…AAIADDIAYN (145 aa)) form the HD domain.

The protein belongs to the dGTPase family. Type 2 subfamily.

This is Deoxyguanosinetriphosphate triphosphohydrolase-like protein from Brucella suis (strain ATCC 23445 / NCTC 10510).